A 232-amino-acid chain; its full sequence is tRNA (guanine-N(1)-)-methyltransferase (232 aa).

S-adenosyl-L-methionine-binding positions include Gly-111 and 131–136 (IGDYIL).

This sequence belongs to the RNA methyltransferase TrmD family. Homodimer.

It is found in the cytoplasm. The catalysed reaction is guanosine(37) in tRNA + S-adenosyl-L-methionine = N(1)-methylguanosine(37) in tRNA + S-adenosyl-L-homocysteine + H(+). In terms of biological role, specifically methylates guanosine-37 in various tRNAs. The chain is tRNA (guanine-N(1)-)-methyltransferase from Bartonella tribocorum (strain CIP 105476 / IBS 506).